A 209-amino-acid chain; its full sequence is Small ribosomal subunit protein uS4 (209 aa).

The S4 RNA-binding domain maps to 98-161 (ARLDNVVYRM…RDLEVIKKAV (64 aa)).

This sequence belongs to the universal ribosomal protein uS4 family. As to quaternary structure, part of the 30S ribosomal subunit. Contacts protein S5. The interaction surface between S4 and S5 is involved in control of translational fidelity.

One of the primary rRNA binding proteins, it binds directly to 16S rRNA where it nucleates assembly of the body of the 30S subunit. Its function is as follows. With S5 and S12 plays an important role in translational accuracy. The protein is Small ribosomal subunit protein uS4 of Thermotoga petrophila (strain ATCC BAA-488 / DSM 13995 / JCM 10881 / RKU-1).